The following is a 584-amino-acid chain: Arginine--tRNA ligase (584 aa).

The 'HIGH' region signature appears at 125–135 (PNIAKEMHVGH).

The protein belongs to the class-I aminoacyl-tRNA synthetase family. In terms of assembly, monomer.

Its subcellular location is the cytoplasm. The catalysed reaction is tRNA(Arg) + L-arginine + ATP = L-arginyl-tRNA(Arg) + AMP + diphosphate. This Thermosynechococcus vestitus (strain NIES-2133 / IAM M-273 / BP-1) protein is Arginine--tRNA ligase.